The following is a 278-amino-acid chain: HTH-type transcriptional activator RhaS (278 aa).

The 99-residue stretch at 174–272 (NLLLAWLEDH…NWSPRDIRQG (99 aa)) folds into the HTH araC/xylS-type domain. 2 consecutive DNA-binding regions (H-T-H motif) follow at residues 191 to 212 (DAVA…KQQT) and 239 to 262 (VTDI…RREF).

As to quaternary structure, binds DNA as a dimer.

The protein localises to the cytoplasm. In terms of biological role, activates expression of the rhaBAD and rhaT operons. This Shigella boydii serotype 4 (strain Sb227) protein is HTH-type transcriptional activator RhaS.